The sequence spans 356 residues: S-adenosylmethionine:tRNA ribosyltransferase-isomerase (356 aa).

The protein belongs to the QueA family. Monomer.

Its subcellular location is the cytoplasm. It carries out the reaction 7-aminomethyl-7-carbaguanosine(34) in tRNA + S-adenosyl-L-methionine = epoxyqueuosine(34) in tRNA + adenine + L-methionine + 2 H(+). The protein operates within tRNA modification; tRNA-queuosine biosynthesis. Functionally, transfers and isomerizes the ribose moiety from AdoMet to the 7-aminomethyl group of 7-deazaguanine (preQ1-tRNA) to give epoxyqueuosine (oQ-tRNA). The polypeptide is S-adenosylmethionine:tRNA ribosyltransferase-isomerase (Xanthomonas oryzae pv. oryzae (strain KACC10331 / KXO85)).